Consider the following 458-residue polypeptide: Argininosuccinate lyase (458 aa).

Belongs to the lyase 1 family. Argininosuccinate lyase subfamily.

The protein resides in the cytoplasm. It catalyses the reaction 2-(N(omega)-L-arginino)succinate = fumarate + L-arginine. The protein operates within amino-acid biosynthesis; L-arginine biosynthesis; L-arginine from L-ornithine and carbamoyl phosphate: step 3/3. The sequence is that of Argininosuccinate lyase from Salmonella dublin (strain CT_02021853).